The primary structure comprises 84 residues: Putative membrane protein insertion efficiency factor (84 aa).

It belongs to the UPF0161 family.

It is found in the cell inner membrane. Its function is as follows. Could be involved in insertion of integral membrane proteins into the membrane. In Shewanella baltica (strain OS195), this protein is Putative membrane protein insertion efficiency factor.